Reading from the N-terminus, the 581-residue chain is Chaperonin GroEL 1 (581 aa).

Residues 29-32 (TIGP), 86-90 (DGTTT), G413, and D492 contribute to the ATP site. A disordered region spans residues 522–543 (PEPEPAAPGGPSGDPMGGMGGM). The span at 531-543 (GPSGDPMGGMGGM) shows a compositional bias: gly residues.

Belongs to the chaperonin (HSP60) family. In terms of assembly, forms a cylinder of 14 subunits composed of two heptameric rings stacked back-to-back. Interacts with the co-chaperonin GroES.

The protein localises to the cytoplasm. It catalyses the reaction ATP + H2O + a folded polypeptide = ADP + phosphate + an unfolded polypeptide.. In terms of biological role, together with its co-chaperonin GroES, plays an essential role in assisting protein folding. The GroEL-GroES system forms a nano-cage that allows encapsulation of the non-native substrate proteins and provides a physical environment optimized to promote and accelerate protein folding. The chain is Chaperonin GroEL 1 from Prochlorococcus marinus (strain MIT 9215).